The primary structure comprises 747 residues: Zinc finger and BTB domain-containing protein 47 (747 aa).

The BTB domain occupies 15 to 83 (CDVDLVLVPQ…IYTSKLLVNA (69 aa)). Residue Lys190 forms a Glycyl lysine isopeptide (Lys-Gly) (interchain with G-Cter in SUMO2) linkage. Residues 243-424 (QTLHVSTGPE…ARGPPATDGL (182 aa)) form a disordered region. The span at 267-277 (GREDGLQRHSD) shows a compositional bias: basic and acidic residues. Acidic residues predominate over residues 278–354 (EEEEDDEEEE…SEEEEGEEGE (77 aa)). The span at 380–398 (RSRENARRRGTPEPEEAGR) shows a compositional bias: basic and acidic residues. The segment at 436 to 459 (HPCQKCPRVFNNRWYLEKHMNVTH) adopts a C2H2-type 1 zinc-finger fold. The segment at 463 to 485 (QICDQCGKRFLLESELLLHRQTD) adopts a C2H2-type 2; degenerate zinc-finger fold. 7 C2H2-type zinc fingers span residues 490 to 513 (IQCVTCGKAFKKLWSLHEHNKIVH), 520 to 542 (FSCEICEKKFYTMAHVRKHMVAH), 548 to 570 (FTCETCGKSFKRSMSLKVHSLQH), 576 to 598 (FRCENCNERFQYKYQLRSHMSIH), 604 to 626 (FMCQWCGKDFNMKQYFDEHMKTH), 632 to 654 (YICEICGKSFTSRPNMKRHRRTH), and 660 to 687 (YPCDVCGQRFRFSNMLKAHKEKCFRVSH). A disordered region spans residues 694–747 (VPAAPGLPPTQPQAHALPLLPGLPQTLPPPPHLPPPPPLFPTTASPGGRMNANN). The segment covering 719-733 (TLPPPPHLPPPPPLF) has biased composition (pro residues).

The protein belongs to the krueppel C2H2-type zinc-finger protein family.

The protein localises to the nucleus. Functionally, may be involved in transcriptional regulation. The sequence is that of Zinc finger and BTB domain-containing protein 47 (ZBTB47) from Homo sapiens (Human).